A 1716-amino-acid polypeptide reads, in one-letter code: DNA-directed RNA polymerase I subunit RPA1 (1716 aa).

Zn(2+) contacts are provided by cysteine 64, cysteine 67, cysteine 74, histidine 77, cysteine 104, and cysteine 107. Positions 110-201 (LTCPRAAIHL…VAHFWKTHMA (92 aa)) are clamp. Zn(2+) contacts are provided by cysteine 205 and cysteine 208. Residues 327 to 433 (FTNGQTVNLQ…IRQILEKKEG (107 aa)) form a clamp region. The tract at residues 410–423 (DSDMDKLMLEKYPG) is rudder. DNA contacts are provided by lysine 431, arginine 436, and arginine 443. Positions 475 to 549 (YPQPVTPWNV…QGAKVVCRHV (75 aa)) are involved in RRN3 binding to Pol I complex. Residue arginine 559 coordinates RNA. 3 residues coordinate Mg(2+): aspartate 595, aspartate 597, and aspartate 599. An RNA-binding site is contributed by aspartate 599. The tract at residues 812–890 (KPNADVMRQR…NEINKACMPF (79 aa)) is funnel. The segment at 967 to 1008 (RPPEFFFHCMAGREGLVDTAVKTSRSGYLQRCIIKHLEGLVI) is bridging helix. Residues 1067–1162 (ADPQKVLRHF…SLSVWRPDIH (96 aa)) are mediates the interaction with TOP2A. The interval 1214–1255 (PGEAVGLLAAQSIGEPSTQMTLNTFHFAGRGEMNVTLGIPRL) is trigger loop. A DNA-binding site is contributed by arginine 1256. The interval 1368-1493 (ASAFRSVNTR…RHSRPQGAEA (126 aa)) is disordered. The segment covering 1380–1397 (TQKDLDDTEDSGRNRREE) has biased composition (basic and acidic residues). Composition is skewed to acidic residues over residues 1398 to 1419 (ERDEEEEGNIVDAEAEEGDADA) and 1429 to 1451 (EEEVDYESEEEGEEEEEEDVQEE). Positions 1452–1464 (ENIKGEGAHQTHE) are enriched in basic and acidic residues. Residues 1465-1477 (PDEEEGSGLEEES) are compositionally biased toward acidic residues.

It belongs to the RNA polymerase beta' chain family. In terms of assembly, component of the RNA polymerase I (Pol I) complex consisting of 13 subunits: a ten-subunit catalytic core composed of POLR1A/RPA1, POLR1B/RPA2, POLR1C/RPAC1, POLR1D/RPAC2, POLR1H/RPA12, POLR2E/RPABC1, POLR2F/RPABC2, POLR2H/RPABC3, POLR2K/RPABC4 and POLR2L/RPABC5; a mobile stalk subunit POLR1F/RPA43 protruding from the core and additional subunits homologous to general transcription factors POLR1E/RPA49 and POLR1G/RPA34. Part of Pol I pre-initiation complex (PIC), in which Pol I core assembles with RRN3 and promoter-bound UTBF and SL1/TIF-IB complex. Interacts (via dock II domain) with TOP2A; this interaction may assist Pol I transcription initiation by releasing supercoils occurring during DNA unwinding. Interacts with CAVIN1; this interaction induces the dissociation of Pol I complex paused at rDNA terminator sequences. Interacts with MYO1C. Interacts with ERBB2. Interacts with DDX11. Interacts with RECQL5. The cofactor is Mg(2+). In terms of processing, phosphorylated.

It localises to the nucleus. Its subcellular location is the nucleolus. The protein localises to the chromosome. It catalyses the reaction RNA(n) + a ribonucleoside 5'-triphosphate = RNA(n+1) + diphosphate. Catalytic core component of RNA polymerase I (Pol I), a DNA-dependent RNA polymerase which synthesizes ribosomal RNA precursors using the four ribonucleoside triphosphates as substrates. Transcribes 47S pre-rRNAs from multicopy rRNA gene clusters, giving rise to 5.8S, 18S and 28S ribosomal RNAs. Pol I-mediated transcription cycle proceeds through transcription initiation, transcription elongation and transcription termination stages. During transcription initiation, Pol I pre-initiation complex (PIC) is recruited by the selectivity factor 1 (SL1/TIF-IB) complex bound to the core promoter that precedes an rDNA repeat unit. The PIC assembly bends the promoter favoring the formation of the transcription bubble and promoter escape. Once the polymerase has escaped from the promoter it enters the elongation phase during which RNA is actively polymerized, based on complementarity with the template DNA strand. Highly processive, assembles in structures referred to as 'Miller trees' where many elongating Pol I complexes queue and transcribe the same rDNA coding regions. At terminator sequences downstream of the rDNA gene, PTRF interacts with Pol I and halts Pol I transcription leading to the release of the RNA transcript and polymerase from the DNA. Forms Pol I active center together with the second largest subunit POLR1B/RPA2. Appends one nucleotide at a time to the 3' end of the nascent RNA, with POLR1A/RPA1 contributing a Mg(2+)-coordinating DxDGD motif, and POLR1B/RPA2 participating in the coordination of a second Mg(2+) ion and providing lysine residues believed to facilitate Watson-Crick base pairing between the incoming nucleotide and the template base. Typically, Mg(2+) ions direct a 5' nucleoside triphosphate to form a phosphodiester bond with the 3' hydroxyl of the preceding nucleotide of the nascent RNA, with the elimination of pyrophosphate. Has proofreading activity: Pauses and backtracks to allow the cleavage of a missincorporated nucleotide via POLR1H/RPA12. High Pol I processivity is associated with decreased transcription fidelity. The protein is DNA-directed RNA polymerase I subunit RPA1 of Rattus norvegicus (Rat).